Reading from the N-terminus, the 134-residue chain is 15.4 kDa class V heat shock protein (134 aa).

Residues 19-126 (SLNNYQENHV…LIDPSDVPES (108 aa)) enclose the sHSP domain.

It belongs to the small heat shock protein (HSP20) family. In terms of assembly, may form oligomeric structures.

It localises to the cytoplasm. In Arabidopsis thaliana (Mouse-ear cress), this protein is 15.4 kDa class V heat shock protein (HSP15.4).